Reading from the N-terminus, the 221-residue chain is Protein myomaker (221 aa).

Residues 1-3 lie on the Extracellular side of the membrane; that stretch reads MGT. Residues 4 to 24 form a helical membrane-spanning segment; the sequence is LVAKLLLPTLSSLAFLPTVSI. At 25-34 the chain is on the cytoplasmic side; sequence AAKRRFHMEA. Residues 35-55 traverse the membrane as a helical segment; the sequence is MVYLFTLFFVALHHACNGPGL. Over 56-64 the chain is Extracellular; the sequence is SVLCFMRHD. Residues 65–85 traverse the membrane as a helical segment; that stretch reads ILEYFSVYGTALSMWVSLMAL. Residues 86–92 lie on the Cytoplasmic side of the membrane; it reads ADFDEPK. The helical transmembrane segment at 93–110 threads the bilayer; the sequence is RSTFVMFGVLTIAVRIYH. At 111–113 the chain is on the extracellular side; that stretch reads DRW. A helical membrane pass occupies residues 114–134; that stretch reads GYGVYSGPIGTAILIIAAKWL. Over 135 to 153 the chain is Cytoplasmic; the sequence is QKMKEKKGLYPDKSVYTQQ. A helical transmembrane segment spans residues 154–174; it reads IGPGLCFGALALMLRFFFEDW. Asp175 is a topological domain (extracellular). Residues 176–196 form a helical membrane-spanning segment; that stretch reads YTYVHSFYHCALAMSFVLLLP. Residues 197 to 221 lie on the Cytoplasmic side of the membrane; that stretch reads KVNKKAGSPGTPAKLDCSTLCCACV. 2 S-palmitoyl cysteine lipidation sites follow: Cys217 and Cys218.

It belongs to the TMEM8 family. Interacts with MYMX. Palmitoylated at the C-terminus; palmitoylation promotes localization to the Golgi apparatus.

Its subcellular location is the cell membrane. The protein localises to the golgi apparatus membrane. Myoblast-specific protein that mediates myoblast fusion, an essential step for the formation of multi-nucleated muscle fibers. Actively participates in the membrane fusion reaction by mediating the mixing of cell membrane lipids (hemifusion) upstream of MYMX. Acts independently of MYMX. Involved in skeletal muscle regeneration in response to injury by mediating the fusion of satellite cells, a population of muscle stem cells, with injured myofibers. Also involved in skeletal muscle hypertrophy, probably by mediating the fusion of satellite cells with myofibers. The sequence is that of Protein myomaker from Homo sapiens (Human).